We begin with the raw amino-acid sequence, 424 residues long: UDP-N-acetylglucosamine 1-carboxyvinyltransferase (424 aa).

22–23 provides a ligand contact to phosphoenolpyruvate; the sequence is KN. UDP-N-acetyl-alpha-D-glucosamine is bound at residue R95. Residue C119 is the Proton donor of the active site. C119 is subject to 2-(S-cysteinyl)pyruvic acid O-phosphothioketal. Residues 124 to 128, D311, and I333 contribute to the UDP-N-acetyl-alpha-D-glucosamine site; that span reads RPVDQ.

The protein belongs to the EPSP synthase family. MurA subfamily.

The protein resides in the cytoplasm. The catalysed reaction is phosphoenolpyruvate + UDP-N-acetyl-alpha-D-glucosamine = UDP-N-acetyl-3-O-(1-carboxyvinyl)-alpha-D-glucosamine + phosphate. It functions in the pathway cell wall biogenesis; peptidoglycan biosynthesis. Cell wall formation. Adds enolpyruvyl to UDP-N-acetylglucosamine. In Polaromonas sp. (strain JS666 / ATCC BAA-500), this protein is UDP-N-acetylglucosamine 1-carboxyvinyltransferase.